A 454-amino-acid polypeptide reads, in one-letter code: Glutamyl-tRNA(Gln) amidotransferase subunit A (454 aa).

Residues Lys-77 and Ser-152 each act as charge relay system in the active site. Catalysis depends on Ser-176, which acts as the Acyl-ester intermediate.

The protein belongs to the amidase family. GatA subfamily. Heterotrimer of A, B and C subunits.

It carries out the reaction L-glutamyl-tRNA(Gln) + L-glutamine + ATP + H2O = L-glutaminyl-tRNA(Gln) + L-glutamate + ADP + phosphate + H(+). Its function is as follows. Allows the formation of correctly charged Gln-tRNA(Gln) through the transamidation of misacylated Glu-tRNA(Gln) in organisms which lack glutaminyl-tRNA synthetase. The reaction takes place in the presence of glutamine and ATP through an activated gamma-phospho-Glu-tRNA(Gln). In Methanothermobacter thermautotrophicus (strain ATCC 29096 / DSM 1053 / JCM 10044 / NBRC 100330 / Delta H) (Methanobacterium thermoautotrophicum), this protein is Glutamyl-tRNA(Gln) amidotransferase subunit A (gatA).